A 542-amino-acid chain; its full sequence is CTP synthase (542 aa).

Positions 1 to 265 (MARYVFITGG…DNEVLAAFGI (265 aa)) are amidoligase domain. CTP is bound at residue serine 13. Serine 13 is a UTP binding site. ATP-binding positions include 14–19 (SLGKGI) and aspartate 71. Aspartate 71 and glutamate 139 together coordinate Mg(2+). Residues 146–148 (DIE), 186–191 (KTKPTQ), and lysine 222 contribute to the CTP site. UTP is bound by residues 186–191 (KTKPTQ) and lysine 222. In terms of domain architecture, Glutamine amidotransferase type-1 spans 291-541 (TIAIVGKYTG…IEAALEQSRL (251 aa)). An L-glutamine-binding site is contributed by glycine 353. The Nucleophile; for glutamine hydrolysis role is filled by cysteine 380. Residues 381–384 (FGMQ), glutamate 404, and arginine 469 each bind L-glutamine. Residues histidine 514 and glutamate 516 contribute to the active site.

This sequence belongs to the CTP synthase family. As to quaternary structure, homotetramer.

The enzyme catalyses UTP + L-glutamine + ATP + H2O = CTP + L-glutamate + ADP + phosphate + 2 H(+). It catalyses the reaction L-glutamine + H2O = L-glutamate + NH4(+). The catalysed reaction is UTP + NH4(+) + ATP = CTP + ADP + phosphate + 2 H(+). It functions in the pathway pyrimidine metabolism; CTP biosynthesis via de novo pathway; CTP from UDP: step 2/2. Its activity is regulated as follows. Allosterically activated by GTP, when glutamine is the substrate; GTP has no effect on the reaction when ammonia is the substrate. The allosteric effector GTP functions by stabilizing the protein conformation that binds the tetrahedral intermediate(s) formed during glutamine hydrolysis. Inhibited by the product CTP, via allosteric rather than competitive inhibition. Catalyzes the ATP-dependent amination of UTP to CTP with either L-glutamine or ammonia as the source of nitrogen. Regulates intracellular CTP levels through interactions with the four ribonucleotide triphosphates. The sequence is that of CTP synthase from Sinorhizobium medicae (strain WSM419) (Ensifer medicae).